The following is a 314-amino-acid chain: Fibrinogen-like protein 1 (314 aa).

Positions 1–22 are cleaved as a signal peptide; the sequence is MGKIYSFVLVAIALMMGREGWA. Residues 28–62 are a coiled coil; sequence CLREQVRLRAQVHQLETRVKQQQTMIAQLLHEKEV. Residues 76–308 enclose the Fibrinogen C-terminal domain; that stretch reads LGGKRQYADC…SVVMKIRPSD (233 aa). Cystine bridges form between C85-C114 and C250-C263.

Homodimer. Interacts (via the Fibrinogen C-terminal domain) with LAG3 (via Ig-like domains 1 and 2). As to expression, mainly expressed in liver. Also expressed in brown adipose tissue.

The protein localises to the secreted. Immune suppressive molecule that inhibits antigen-specific T-cell activation by acting as a major ligand of LAG3. Responsible for LAG3 T-cell inhibitory function. Binds LAG3 independently from MHC class II (MHC-II). Secreted by, and promotes growth of, hepatocytes. This is Fibrinogen-like protein 1 (Fgl1) from Mus musculus (Mouse).